A 123-amino-acid chain; its full sequence is Small ribosomal subunit protein uS13c (123 aa).

Positions 90–123 are disordered; that stretch reads GKRHRNNLPVRGQRTRTNARSRRGSKKTVTGKKK. Positions 102-123 are enriched in basic residues; that stretch reads QRTRTNARSRRGSKKTVTGKKK.

Belongs to the universal ribosomal protein uS13 family. As to quaternary structure, part of the 30S ribosomal subunit.

The protein localises to the plastid. Its subcellular location is the chloroplast. In terms of biological role, located at the top of the head of the 30S subunit, it contacts several helices of the 16S rRNA. The protein is Small ribosomal subunit protein uS13c of Trieres chinensis (Marine centric diatom).